Reading from the N-terminus, the 563-residue chain is Arginine--tRNA ligase (563 aa).

The 'HIGH' region motif lies at 121 to 131 (PNIAKPFSIGH).

Belongs to the class-I aminoacyl-tRNA synthetase family. In terms of assembly, monomer.

It is found in the cytoplasm. It catalyses the reaction tRNA(Arg) + L-arginine + ATP = L-arginyl-tRNA(Arg) + AMP + diphosphate. This Streptococcus pneumoniae serotype 4 (strain ATCC BAA-334 / TIGR4) protein is Arginine--tRNA ligase (argS).